Consider the following 218-residue polypeptide: Probable septum site-determining protein MinC (218 aa).

The protein belongs to the MinC family. As to quaternary structure, interacts with MinD and FtsZ.

Functionally, cell division inhibitor that blocks the formation of polar Z ring septums. Rapidly oscillates between the poles of the cell to destabilize FtsZ filaments that have formed before they mature into polar Z rings. Prevents FtsZ polymerization. This chain is Probable septum site-determining protein MinC, found in Kosmotoga olearia (strain ATCC BAA-1733 / DSM 21960 / TBF 19.5.1).